A 932-amino-acid chain; its full sequence is Ribosome biogenesis protein ERB1 (932 aa).

A compositionally biased stretch (low complexity) spans 1-18 (MVRPSSSSSASASAARSG). The tract at residues 1 to 229 (MVRPSSSSSA…RSQAAQAFDL (229 aa)) is disordered. The span at 27–36 (PTATNPTTRA) shows a compositional bias: polar residues. Acidic residues-rich tracts occupy residues 57-119 (VSDD…EVDS) and 150-172 (DNSD…DEDE). The segment covering 175–184 (SAFAARSDAS) has biased composition (low complexity). 2 WD repeats span residues 555-594 (PDGG…CTAS) and 604-644 (AERS…NYAK). Residues 679-698 (SMPSKPDARSPVAWTRPSEA) form a disordered region. WD repeat units lie at residues 762-800 (SKGS…LIKT), 803-842 (SGFK…RPYK), 846-885 (YHAR…DYGE), and 901-932 (KNGL…LWTT).

This sequence belongs to the WD repeat BOP1/ERB1 family. Component of the NOP7 complex, composed of ERB1, NOP7 and YTM1. The complex is held together by ERB1, which interacts with NOP7 via its N-terminal domain and with YTM1 via a high-affinity interaction between the seven-bladed beta-propeller domains of the 2 proteins. The NOP7 complex associates with the 66S pre-ribosome.

It is found in the nucleus. The protein resides in the nucleolus. Its subcellular location is the nucleoplasm. Its function is as follows. Component of the NOP7 complex, which is required for maturation of the 25S and 5.8S ribosomal RNAs and formation of the 60S ribosome. This Mycosarcoma maydis (Corn smut fungus) protein is Ribosome biogenesis protein ERB1.